A 663-amino-acid chain; its full sequence is CXXC-type zinc finger protein 1 (663 aa).

The segment at 60–110 adopts a PHD-type zinc-finger fold; it reads QAYCICRSSDCSRFMIGCDGCEEWYHGDCIGITEKEAKHIKQYYCRRCKKE. Residues 134–161 show a composition bias toward low complexity; sequence TSLNAPGVGPSGAAPAAAPVASATTSQQ. Residues 134 to 183 are disordered; sequence TSLNAPGVGPSGAAPAAAPVASATTSQQAPPPTTAAAKRKNSSAREPKMG. A CXXC-type zinc finger spans residues 175–219; the sequence is SSAREPKMGKRCGTCEGCRRPNCNQCDACRVRVGHKPRCIFRTCV. Cys186, Cys189, Cys192, Cys197, Cys200, Cys203, Cys213, and Cys218 together coordinate Zn(2+). The tract at residues 230 to 254 is disordered; that stretch reads QATQAGPSRKREKAAPKSRNVQVGP. Ser258 is modified (phosphoserine).

Component of the SET1 complex, composed at least of the catalytic subunit Set1, wds/WDR5, Wdr82, Rbbp5, ash2, Cfp1/CXXC1, hcf and Dpy-30L1.

It localises to the nucleus. Its function is as follows. Component of the SET1 complex that specifically di- and trimethylates 'Lys-4' of histone H3. Essential for Set1 association with chromatin and trimethylation of histone H3 at 'Lys-4' at transcription puffs. Additionally, is critical for general chromosomal association of Set1. The sequence is that of CXXC-type zinc finger protein 1 (Cfp1) from Drosophila melanogaster (Fruit fly).